Here is a 201-residue protein sequence, read N- to C-terminus: MSVYSPRLRELVEGLRRLPGVGAKTAQRMALHLLQRDRDGARQLADALQRAVDGVGHCPECGLLTEEERCGLCASPQRRRTLLCVVESSADVFALEQATDFQGLYFVLGGALSPLDGIGPEELGLDRLQQRLEAGEVEEIILATNPTIEGEATAHYVQSLAAERGVRTTRIAHGVPMGGALEQVDQGTLSHAFMGRRDYEG.

Residues 58-73 form a C4-type zinc finger; it reads CPECGLLTEEERCGLC. A Toprim domain is found at 81 to 176; sequence TLLCVVESSA…RTTRIAHGVP (96 aa).

It belongs to the RecR family.

Its function is as follows. May play a role in DNA repair. It seems to be involved in an RecBC-independent recombinational process of DNA repair. It may act with RecF and RecO. The polypeptide is Recombination protein RecR (Halorhodospira halophila (strain DSM 244 / SL1) (Ectothiorhodospira halophila (strain DSM 244 / SL1))).